The chain runs to 266 residues: Esterase AGAP003155 (266 aa).

Residues Ser114, Asp172, and His199 each act as charge relay system in the active site. The tract at residues 231–266 is disordered; the sequence is ATEENSFHLEGQEEAEESALQPVHEGLQNGSDSDSD.

The protein belongs to the LovG family.

The sequence is that of Esterase AGAP003155 from Anopheles gambiae (African malaria mosquito).